We begin with the raw amino-acid sequence, 66 residues long: Small vasohibin-binding protein (66 aa).

Positions 1–23 (MDPPARKEKSKVKEPAFRVEKAK) are enriched in basic and acidic residues. The tract at residues 1–30 (MDPPARKEKSKVKEPAFRVEKAKQKSAQQE) is disordered. Residues 5 to 52 (ARKEKSKVKEPAFRVEKAKQKSAQQELKQRQRAEIYALNRVMTELEQQ) are a coiled coil.

This sequence belongs to the SVBP family. As to quaternary structure, interacts with VASH1 and VASH2. Highly expressed in bone marrow, spleen and testis.

The protein localises to the cytoplasm. It is found in the secreted. The protein resides in the cytoskeleton. Its function is as follows. Enhances the tyrosine carboxypeptidase activity of VASH1 and VASH2, thereby promoting the removal of the C-terminal tyrosine residue of alpha-tubulin. Also required to enhance the solubility and secretion of VASH1 and VASH2. Plays a role in axon and excitatory synapse formation. The sequence is that of Small vasohibin-binding protein from Mus musculus (Mouse).